The chain runs to 463 residues: Chromosomal replication initiator protein DnaA (463 aa).

A domain I, interacts with DnaA modulators region spans residues 1–83 (MNTNQIILTD…LQLFQHYNNT (83 aa)). Residues 83-124 (TIKSIDIITKELPGTTQTVIELPTKTFADIGSSELNSENIFS) are domain II. Residues 125 to 343 (TLDVRFTFDN…GALNKVIAHS (219 aa)) are domain III, AAA+ region. Glycine 171, glycine 173, lysine 174, and threonine 175 together coordinate ATP. The tract at residues 344 to 463 (NFTLKEITLE…INLLMKILQH (120 aa)) is domain IV, binds dsDNA.

Belongs to the DnaA family. In terms of assembly, oligomerizes as a right-handed, spiral filament on DNA at oriC.

It is found in the cytoplasm. Functionally, plays an essential role in the initiation and regulation of chromosomal replication. ATP-DnaA binds to the origin of replication (oriC) to initiate formation of the DNA replication initiation complex once per cell cycle. Binds the DnaA box (a 9 base pair repeat at the origin) and separates the double-stranded (ds)DNA. Forms a right-handed helical filament on oriC DNA; dsDNA binds to the exterior of the filament while single-stranded (ss)DNA is stabiized in the filament's interior. The ATP-DnaA-oriC complex binds and stabilizes one strand of the AT-rich DNA unwinding element (DUE), permitting loading of DNA polymerase. After initiation quickly degrades to an ADP-DnaA complex that is not apt for DNA replication. Binds acidic phospholipids. This chain is Chromosomal replication initiator protein DnaA, found in Rickettsia akari (strain Hartford).